The sequence spans 158 residues: SsrA-binding protein (158 aa).

A disordered region spans residues 135–158 (DKRKTLKDRDWERDKQRGFKKDLD). Positions 141-158 (KDRDWERDKQRGFKKDLD) are enriched in basic and acidic residues.

This sequence belongs to the SmpB family.

The protein resides in the cytoplasm. Functionally, required for rescue of stalled ribosomes mediated by trans-translation. Binds to transfer-messenger RNA (tmRNA), required for stable association of tmRNA with ribosomes. tmRNA and SmpB together mimic tRNA shape, replacing the anticodon stem-loop with SmpB. tmRNA is encoded by the ssrA gene; the 2 termini fold to resemble tRNA(Ala) and it encodes a 'tag peptide', a short internal open reading frame. During trans-translation Ala-aminoacylated tmRNA acts like a tRNA, entering the A-site of stalled ribosomes, displacing the stalled mRNA. The ribosome then switches to translate the ORF on the tmRNA; the nascent peptide is terminated with the 'tag peptide' encoded by the tmRNA and targeted for degradation. The ribosome is freed to recommence translation, which seems to be the essential function of trans-translation. The sequence is that of SsrA-binding protein from Psychrobacter arcticus (strain DSM 17307 / VKM B-2377 / 273-4).